Reading from the N-terminus, the 368-residue chain is Cytochrome-c peroxidase IdrP2 (368 aa).

The first 27 residues, 1-27, serve as a signal peptide directing secretion; it reads MKWHRGRLTQTLGAMGLTATLTVAAQA. 2 consecutive Cytochrome c domains span residues 48 to 158 and 201 to 346; these read AMIE…ALWQ and KEAQ…LTLS. Heme c-binding residues include cysteine 70, cysteine 73, histidine 74, cysteine 216, cysteine 219, and histidine 220.

In terms of assembly, the iodate reductase (Idr) complex is composed of a molybdopterin-dependent iodate reductase (IdrA and IdrB subunits) and two associated peroxidases (IdrP1 and IdrP2). Heme c serves as cofactor.

Its subcellular location is the periplasm. It carries out the reaction 2 Fe(II)-[cytochrome c] + H2O2 + 2 H(+) = 2 Fe(III)-[cytochrome c] + 2 H2O. In terms of biological role, involved in iodate respiration. Probably reduces the H(2)O(2) produced by IdrA/IdrB to H(2)O, using a reduced cytochrome c as the electron donor. The sequence is that of Cytochrome-c peroxidase IdrP2 from Pseudomonas sp. (strain SCT).